Reading from the N-terminus, the 235-residue chain is Ubiquinone/menaquinone biosynthesis C-methyltransferase UbiE (235 aa).

S-adenosyl-L-methionine-binding residues include Thr-59, Asp-84, and Ser-123.

Belongs to the class I-like SAM-binding methyltransferase superfamily. MenG/UbiE family.

The enzyme catalyses a 2-demethylmenaquinol + S-adenosyl-L-methionine = a menaquinol + S-adenosyl-L-homocysteine + H(+). It carries out the reaction a 2-methoxy-6-(all-trans-polyprenyl)benzene-1,4-diol + S-adenosyl-L-methionine = a 5-methoxy-2-methyl-3-(all-trans-polyprenyl)benzene-1,4-diol + S-adenosyl-L-homocysteine + H(+). It participates in quinol/quinone metabolism; menaquinone biosynthesis; menaquinol from 1,4-dihydroxy-2-naphthoate: step 2/2. It functions in the pathway cofactor biosynthesis; ubiquinone biosynthesis. Methyltransferase required for the conversion of demethylmenaquinol (DMKH2) to menaquinol (MKH2) and the conversion of 2-polyprenyl-6-methoxy-1,4-benzoquinol (DDMQH2) to 2-polyprenyl-3-methyl-6-methoxy-1,4-benzoquinol (DMQH2). The chain is Ubiquinone/menaquinone biosynthesis C-methyltransferase UbiE from Campylobacter jejuni subsp. jejuni serotype O:2 (strain ATCC 700819 / NCTC 11168).